A 106-amino-acid chain; its full sequence is UPF0642 protein YBL028C (106 aa).

Residues 1–12 (MAKSLRASSHLN) are compositionally biased toward polar residues. 2 disordered regions span residues 1–21 (MAKS…RRGV) and 52–106 (KEEQ…FTRF). Positions 62–72 (DEKKSNEEAPR) are enriched in basic and acidic residues. Residues 83–106 (GRHHTYKKAKLMKQSKKKTSFTRF) are compositionally biased toward basic residues.

Belongs to the UPF0642 family.

This chain is UPF0642 protein YBL028C, found in Saccharomyces cerevisiae (strain ATCC 204508 / S288c) (Baker's yeast).